A 76-amino-acid polypeptide reads, in one-letter code: Tautomerase PptA (76 aa).

The active-site Proton acceptor; via imino nitrogen is the P2.

It belongs to the 4-oxalocrotonate tautomerase family. PptA subfamily. Homodimer.

Its subcellular location is the cytoplasm. The sequence is that of Tautomerase PptA from Pectobacterium carotovorum subsp. carotovorum (strain PC1).